A 115-amino-acid polypeptide reads, in one-letter code: Glutaredoxin-like protein C5orf63 homolog (115 aa).

A disulfide bridge connects residues C40 and C43.

Belongs to the glutaredoxin family. YDR286C subfamily.

The polypeptide is Glutaredoxin-like protein C5orf63 homolog (Mus musculus (Mouse)).